Reading from the N-terminus, the 508-residue chain is Glutamyl-tRNA(Gln) amidotransferase subunit B, mitochondrial (508 aa).

This sequence belongs to the GatB/GatE family. GatB subfamily. Subunit of the heterotrimeric GatFAB amidotransferase (AdT) complex, composed of A, B and F subunits.

It is found in the mitochondrion. The catalysed reaction is L-glutamyl-tRNA(Gln) + L-glutamine + ATP + H2O = L-glutaminyl-tRNA(Gln) + L-glutamate + ADP + phosphate + H(+). Its function is as follows. Allows the formation of correctly charged Gln-tRNA(Gln) through the transamidation of misacylated Glu-tRNA(Gln) in the mitochondria. The reaction takes place in the presence of glutamine and ATP through an activated gamma-phospho-Glu-tRNA(Gln). This is Glutamyl-tRNA(Gln) amidotransferase subunit B, mitochondrial from Scheffersomyces stipitis (strain ATCC 58785 / CBS 6054 / NBRC 10063 / NRRL Y-11545) (Yeast).